We begin with the raw amino-acid sequence, 75 residues long: Cytochrome c oxidase assembly factor 5 (75 aa).

Positions 28-66 (QHDCVVKEGKKPSECLKEGHCRSMQVAFFECKRSMLDTR) constitute a CHCH domain. A Cx10C motif motif is present at residues 31–42 (CVVKEGKKPSEC). Intrachain disulfides connect Cys31/Cys58 and Cys42/Cys48. Residues 48–58 (CRSMQVAFFEC) carry the Cx9C motif motif.

It belongs to the PET191 family.

Involved in an early step of the mitochondrial complex IV assembly process. The chain is Cytochrome c oxidase assembly factor 5 (coa5) from Danio rerio (Zebrafish).